The sequence spans 374 residues: Transcription factor IIIA (374 aa).

7 consecutive C2H2-type zinc fingers follow at residues F23 to H47, F53 to H77, F83 to H107, Y113 to H138, Y144 to H169, P204 to H226, and Y236 to H261. The C2H2-type 8; atypical zinc finger occupies F267 to C291. The segment at Y349–H374 adopts a C2H2-type 9 zinc-finger fold.

The protein resides in the nucleus. In terms of biological role, is required for correct transcription of 5S RNA genes by RNA polymerase III. Also binds the transcribed 5S RNA's. Initiates transcription of the 5S ribosomal RNA gene. The protein is Transcription factor IIIA (sfc2) of Schizosaccharomyces pombe (strain 972 / ATCC 24843) (Fission yeast).